A 235-amino-acid chain; its full sequence is Proteasome subunit alpha type-2-A (235 aa).

Lys-64 is covalently cross-linked (Glycyl lysine isopeptide (Lys-Gly) (interchain with G-Cter in ubiquitin)).

The protein belongs to the peptidase T1A family. In terms of assembly, component of the 20S core complex of the 26S proteasome. The 26S proteasome is composed of a core protease (CP), known as the 20S proteasome, capped at one or both ends by the 19S regulatory particle (RP/PA700). The 20S proteasome core is composed of 28 subunits that are arranged in four stacked rings, resulting in a barrel-shaped structure. The two end rings are each formed by seven alpha subunits, and the two central rings are each formed by seven beta subunits. The catalytic chamber with the active sites is on the inside of the barrel.

The protein resides in the cytoplasm. Its subcellular location is the nucleus. In terms of biological role, the proteasome is a multicatalytic proteinase complex which is characterized by its ability to cleave peptides with Arg, Phe, Tyr, Leu, and Glu adjacent to the leaving group at neutral or slightly basic pH. The proteasome has an ATP-dependent proteolytic activity. This is Proteasome subunit alpha type-2-A (PAB1) from Arabidopsis thaliana (Mouse-ear cress).